The following is a 194-amino-acid chain: ATP-dependent Clp protease proteolytic subunit (194 aa).

The active-site Nucleophile is the S98. Residue H123 is part of the active site.

This sequence belongs to the peptidase S14 family. Fourteen ClpP subunits assemble into 2 heptameric rings which stack back to back to give a disk-like structure with a central cavity, resembling the structure of eukaryotic proteasomes.

The protein localises to the cytoplasm. The enzyme catalyses Hydrolysis of proteins to small peptides in the presence of ATP and magnesium. alpha-casein is the usual test substrate. In the absence of ATP, only oligopeptides shorter than five residues are hydrolyzed (such as succinyl-Leu-Tyr-|-NHMec, and Leu-Tyr-Leu-|-Tyr-Trp, in which cleavage of the -Tyr-|-Leu- and -Tyr-|-Trp bonds also occurs).. Its function is as follows. Cleaves peptides in various proteins in a process that requires ATP hydrolysis. Has a chymotrypsin-like activity. Plays a major role in the degradation of misfolded proteins. This chain is ATP-dependent Clp protease proteolytic subunit, found in Clostridium tetani (strain Massachusetts / E88).